Consider the following 934-residue polypeptide: Protocadherin gamma-C3 (934 aa).

Residues 1 to 31 (MVPEAWRSGLVSTGRVVGVLLLLGALNKAST) form the signal peptide. 6 consecutive Cadherin domains span residues 32–135 (VIHY…NPAF), 136–244 (PTQE…APVF), 245–352 (NQSL…APEI), 353–457 (TVTS…PPQS), 458–567 (SQSS…APQV), and 572–685 (PGGS…APRE). Over 32–693 (VIHYEIPEER…REQKKNLTFY (662 aa)) the chain is Extracellular. N-linked (GlcNAc...) asparagine glycosylation is found at Asn-245, Asn-424, Asn-478, Asn-550, Asn-615, and Asn-689. Residues 694 to 714 (LLLSLILVSVGFVVTVFGVII) traverse the membrane as a helical segment. The Cytoplasmic portion of the chain corresponds to 715–934 (FKVYKWKQSR…KKKSGKKEKK (220 aa)). Disordered regions lie at residues 804–843 (ESAP…WPNN) and 904–934 (ATLT…KEKK). Residues 812-843 (APPNTDWRFSQAQRPGTSGSQNGDDTGTWPNN) show a composition bias toward polar residues. Over residues 924-934 (NKKKSGKKEKK) the composition is skewed to basic residues.

The protein localises to the cell membrane. In terms of biological role, potential calcium-dependent cell-adhesion protein. May be involved in the establishment and maintenance of specific neuronal connections in the brain. This is Protocadherin gamma-C3 (PCDHGC3) from Homo sapiens (Human).